The chain runs to 362 residues: 5'-tyrosyl-DNA phosphodiesterase (362 aa).

The span at 1–10 (MSNSDDEIQE) shows a compositional bias: acidic residues. A disordered region spans residues 1 to 43 (MSNSDDEIQEIEAKRQKMSQEDSEVEIEILDEPEQGKLKNSSM). A compositionally biased stretch (basic and acidic residues) spans 11 to 20 (IEAKRQKMSQ). The segment covering 21-33 (EDSEVEIEILDEP) has biased composition (acidic residues). The interval 126 to 130 (NIDGL) is interaction with 5' end of substrate DNA. 2 residues coordinate Mg(2+): Asp128 and Glu158. The segment at 232 to 237 (HLESTR) is interaction with 5' end of substrate DNA. Asp271 serves as the catalytic Proton donor/acceptor. The segment at 273-275 (NLR) is interaction with 5' end of substrate DNA.

It belongs to the CCR4/nocturin family. TTRAP/TDP2 subfamily. In terms of assembly, interacts with mxl-1; the interaction promotes axon regeneration after injury. Interacts with ets-4; the interaction is required for the sumoylation of ets-4. Mg(2+) serves as cofactor. Mn(2+) is required as a cofactor.

The protein resides in the nucleus. The protein localises to the PML body. Functionally, DNA repair enzyme that can remove a variety of covalent adducts from DNA through hydrolysis of a 5'-phosphodiester bond, giving rise to DNA with a free 5' phosphate. Catalyzes the hydrolysis of dead-end complexes between DNA and the topoisomerase 2 (top2) active site tyrosine residue. Hydrolyzes 5'-phosphoglycolates on protruding 5' ends on DNA double-strand breaks (DSBs) due to DNA damage by radiation and free radicals. Inhibits axon regeneration after neuronal injury by promoting the sumoylation of ets-4, thereby inhibiting the phosphorylation of ets-4 required for probable interaction with cebp-1 and activation of svh-2 expression. The sequence is that of 5'-tyrosyl-DNA phosphodiesterase from Caenorhabditis elegans.